A 430-amino-acid polypeptide reads, in one-letter code: 4-hydroxy-3-methylbut-2-en-1-yl diphosphate synthase (flavodoxin) (430 aa).

[4Fe-4S] cluster-binding residues include C310, C313, C356, and E363.

The protein belongs to the IspG family. The cofactor is [4Fe-4S] cluster.

It catalyses the reaction (2E)-4-hydroxy-3-methylbut-2-enyl diphosphate + oxidized [flavodoxin] + H2O + 2 H(+) = 2-C-methyl-D-erythritol 2,4-cyclic diphosphate + reduced [flavodoxin]. The protein operates within isoprenoid biosynthesis; isopentenyl diphosphate biosynthesis via DXP pathway; isopentenyl diphosphate from 1-deoxy-D-xylulose 5-phosphate: step 5/6. Converts 2C-methyl-D-erythritol 2,4-cyclodiphosphate (ME-2,4cPP) into 1-hydroxy-2-methyl-2-(E)-butenyl 4-diphosphate. This Nitrobacter winogradskyi (strain ATCC 25391 / DSM 10237 / CIP 104748 / NCIMB 11846 / Nb-255) protein is 4-hydroxy-3-methylbut-2-en-1-yl diphosphate synthase (flavodoxin).